A 253-amino-acid polypeptide reads, in one-letter code: Imidazole glycerol phosphate synthase subunit HisF (253 aa).

Catalysis depends on residues aspartate 11 and aspartate 130.

It belongs to the HisA/HisF family. In terms of assembly, heterodimer of HisH and HisF.

The protein resides in the cytoplasm. The enzyme catalyses 5-[(5-phospho-1-deoxy-D-ribulos-1-ylimino)methylamino]-1-(5-phospho-beta-D-ribosyl)imidazole-4-carboxamide + L-glutamine = D-erythro-1-(imidazol-4-yl)glycerol 3-phosphate + 5-amino-1-(5-phospho-beta-D-ribosyl)imidazole-4-carboxamide + L-glutamate + H(+). It functions in the pathway amino-acid biosynthesis; L-histidine biosynthesis; L-histidine from 5-phospho-alpha-D-ribose 1-diphosphate: step 5/9. In terms of biological role, IGPS catalyzes the conversion of PRFAR and glutamine to IGP, AICAR and glutamate. The HisF subunit catalyzes the cyclization activity that produces IGP and AICAR from PRFAR using the ammonia provided by the HisH subunit. This chain is Imidazole glycerol phosphate synthase subunit HisF, found in Geobacter sulfurreducens (strain ATCC 51573 / DSM 12127 / PCA).